The primary structure comprises 721 residues: WD repeat and coiled-coil-containing protein (721 aa).

Methionine 1 carries the N-acetylmethionine modification. 2 WD repeats span residues 55 to 98 (GQFE…MESS) and 154 to 194 (NTQG…LHRC). Phosphoserine is present on residues serine 299, serine 468, serine 501, and serine 523. Residues 520-537 (QPASLPRHSSTPDHTSTL) show a composition bias toward polar residues. The interval 520–553 (QPASLPRHSSTPDHTSTLEPPRLPQRKNLQSEKE) is disordered. Position 530 is a phosphothreonine (threonine 530). The tract at residues 539–545 (PPRLPQR) is interaction with HCK. Positions 556–584 (QLSKEVEILSRNLVEMQRCLSELTNRLHN) form a coiled coil. Serine 686 and serine 690 each carry phosphoserine.

In terms of assembly, oligomer. Interacts with HCK (via SH3 domain). In terms of processing, phosphorylated on Tyr when associated with HCK.

The sequence is that of WD repeat and coiled-coil-containing protein from Homo sapiens (Human).